The sequence spans 410 residues: MAKINDNYLKLKAGYLFPEIGRRVRAFAEANPSAKVIRLGIGDVTRPLAPAVLKAFHDAVDDLATTDKFAGYGPEQGYDWLINAIIDKSYKPLGVSLKTEEIFISDGSKCDCANILDIFAMDNVVAIGDPVYPVYNDTNVMIGRTGEADEKGYYKGIVYMPCNEANGFIPELPKEKVDIIYLCFPNNPTGTVASKAELKKWVDYANANDAVIFFDAAYEAFITDPSIPHSIYEIEGAKKCAIEFRSFSKTAGFTGVRCGLVVVPEEVMGTTADGERYSFNRLWLRRTTTKFNGASYPVQRAAAAVYSDEGWKQTKEVIDYYMENARIIREGLKEVGVTVFGGVDAPYIWLKTPGGMTSWDFFDKLLTECNVVGTPGSGFGPSGEGYFRLSAFGHRENVIEAVERIKKNLK.

Substrate is bound by residues Tyr15 and Gly42. Residues Tyr72, Ser108–Lys109, Tyr132, Asn187, Tyr218, and Ser246–Ser248 each bind pyridoxal 5'-phosphate. Lys109, Tyr132, and Asn187 together coordinate substrate. At Lys249 the chain carries N6-(pyridoxal phosphate)lysine. Pyridoxal 5'-phosphate contacts are provided by Arg257 and Asn292. Asn292 and Arg388 together coordinate substrate.

This sequence belongs to the class-I pyridoxal-phosphate-dependent aminotransferase family. LL-diaminopimelate aminotransferase subfamily. As to quaternary structure, homodimer. Requires pyridoxal 5'-phosphate as cofactor.

The catalysed reaction is (2S,6S)-2,6-diaminopimelate + 2-oxoglutarate = (S)-2,3,4,5-tetrahydrodipicolinate + L-glutamate + H2O + H(+). Its pathway is amino-acid biosynthesis; L-lysine biosynthesis via DAP pathway; LL-2,6-diaminopimelate from (S)-tetrahydrodipicolinate (aminotransferase route): step 1/1. Its function is as follows. Involved in the synthesis of meso-diaminopimelate (m-DAP or DL-DAP), required for both lysine and peptidoglycan biosynthesis. Catalyzes the direct conversion of tetrahydrodipicolinate to LL-diaminopimelate. The sequence is that of LL-diaminopimelate aminotransferase from Geotalea daltonii (strain DSM 22248 / JCM 15807 / FRC-32) (Geobacter daltonii).